The chain runs to 349 residues: Early nodulin-like protein 2 (349 aa).

Residues 1–28 form the signal peptide; sequence MTFLKMKSLSFFFTILLSLSTLFTISNA. The region spanning 29-130 is the Phytocyanin domain; that stretch reads RKFNVGGSGA…GQKLNVVVIS (102 aa). The cysteines at positions 84 and 118 are disulfide-linked. A disordered region spans residues 136-330; the sequence is TAQSPHAAAP…GQKKSSANGM (195 aa). Composition is skewed to low complexity over residues 145–201 and 224–234; these read PGSS…SPPG and TSPVSPSSAPM. The span at 249 to 260 shows a compositional bias: polar residues; the sequence is IPPSSAPMTSPP. The segment covering 263–312 has biased composition (low complexity); the sequence is MAPKSSSPVSNSPTVSPSLAPGGSTSSSPSDSPSGSAMGPSGDGPSAAGD. S325 is lipidated: GPI-anchor amidated serine. Positions 326–349 are cleaved as a propeptide — removed in mature form; sequence SANGMTVMSITTVLSLVLTIFLSA.

The protein belongs to the early nodulin-like (ENODL) family. Mostly expressed in leaves and roots, and, to a lower extent, in seedlings, stems and flowers, but barely in seeds.

It localises to the cell membrane. Functionally, may act as a carbohydrate transporter. The sequence is that of Early nodulin-like protein 2 from Arabidopsis thaliana (Mouse-ear cress).